Consider the following 107-residue polypeptide: Integration host factor subunit beta (107 aa).

The span at 82–101 (PGKELRERVDRRAGEPLKAE) shows a compositional bias: basic and acidic residues. The disordered stretch occupies residues 82 to 107 (PGKELRERVDRRAGEPLKAEDPDDDL).

The protein belongs to the bacterial histone-like protein family. Heterodimer of an alpha and a beta chain.

In terms of biological role, this protein is one of the two subunits of integration host factor, a specific DNA-binding protein that functions in genetic recombination as well as in transcriptional and translational control. The polypeptide is Integration host factor subunit beta (Paraburkholderia xenovorans (strain LB400)).